Reading from the N-terminus, the 266-residue chain is Tropinone reductase homolog At1g07440 (266 aa).

NADP(+) is bound at residue 18–42; the sequence is LVTGGTKGIGHAIVEEFAGFGAVIH. Residue serine 151 participates in substrate binding. Residue tyrosine 164 is the Proton acceptor of the active site.

This sequence belongs to the short-chain dehydrogenases/reductases (SDR) family. SDR65C subfamily.

This is Tropinone reductase homolog At1g07440 from Arabidopsis thaliana (Mouse-ear cress).